Here is a 503-residue protein sequence, read N- to C-terminus: Anaerobic nitric oxide reductase flavorubredoxin (503 aa).

Residues 30-210 (LQGSSYNSYL…PFSRLVTAKI (181 aa)) form a zinc metallo-hydrolase region. Fe cation-binding residues include H79, E81, D83, H147, D166, and H227. The 140-residue stretch at 254–393 (ITLFYDTMSN…ICREHGREIA (140 aa)) folds into the Flavodoxin-like domain. FMN-binding positions include 260–264 (TMSNN) and 342–369 (AFGS…ETTL). Positions 451-502 (NGCMQCSVCQWIYDPALGEPMQDVTPGTMWSDVPDSFLCPECGLGKDVFNPI) constitute a Rubredoxin-like domain. 4 residues coordinate Fe cation: C456, C459, C489, and C492.

The protein in the N-terminal section; belongs to the zinc metallo-hydrolase group 3 family. Homotetramer. The cofactor is Fe cation. FMN serves as cofactor.

Its subcellular location is the cytoplasm. The protein operates within nitrogen metabolism; nitric oxide reduction. Functionally, anaerobic nitric oxide reductase; uses NADH to detoxify nitric oxide (NO), protecting several 4Fe-4S NO-sensitive enzymes. Has at least 2 reductase partners, only one of which (NorW, flavorubredoxin reductase) has been identified. NO probably binds to the di-iron center; electrons enter from the NorW at rubredoxin and are transferred sequentially to the FMN center and the di-iron center. Also able to function as an aerobic oxygen reductase. This Pectobacterium carotovorum subsp. carotovorum (strain PC1) protein is Anaerobic nitric oxide reductase flavorubredoxin.